A 785-amino-acid polypeptide reads, in one-letter code: E3 UFM1-protein ligase 1 homolog (785 aa).

A compositionally biased stretch (basic and acidic residues) spans 396 to 416 (MKHQDVIPDKESAENKADKRD). The segment at 396-473 (MKHQDVIPDK…KSAGGKKGAK (78 aa)) is disordered. Over residues 439–449 (KSTKKHARGHR) the composition is skewed to basic residues.

It belongs to the UFL1 family.

E3 UFM1-protein ligase that mediates ufmylation of target proteins. The polypeptide is E3 UFM1-protein ligase 1 homolog (Culex quinquefasciatus (Southern house mosquito)).